We begin with the raw amino-acid sequence, 1438 residues long: MDSDTSSADFHSTETLVSTPKYSYGVLINVILLVSWTCFRVVNWFLVTLPSILLGMLSKTFQITLSLSSILMFVVAVTAICFLVVRYKYLTRYSRNSAAKEPAKKSFDIDDLSKKKKSSSKTSSNYLDQFLSAIQVFGYLEGPVFHELTRNMTTQKVLPNEVLYLDESLGFSIVVEGTMQVYTKVTNLSNSSLNAEDDGLDLRYENDDVLCIGNDKYQLLNEVKSGAPLSSLMSTLDLFTSNEVPLSPTKFGSYSLTAVTPLELSPNNTGGNSPPPSLAPEIVARPKGTTSTTLAIIPYTAFQRLHKKYPKATSHIVTMVLTRLYKVSMNTIYNYLGLSKDILDCERNLNAETNERLPSYLSKGIIEKFHKTEESASVEGSPTLPRRSTVNLRALTRQASSSRYVVLASRSKSTHPGDLLSSVPLSRRSDYYETQTIPNESEDSPTIQRSSLRRRASHSTSLRKSNSVLEDIRVRGFSNEREETEETSLRTAIVEQIFTHLGISEDDPTVMNINPTSASSSASSSIVGISKLNYGSLDSINSPRVDPMTSIRSSLASNGNKVYQTINQHTKEADVLQEKPKKVVLPGSRGDDSDFVAVKDEFARAIQMKYIQPGKTIIEQDSFHTGIFYVIDGSLDVIQESNGKSKKIYTVKAGGITGYLNCLIGMKSLVSVKASEDSSAIVAHIPSHMYSKLIDKFYFLQLPIARRLKRLLSKQFLTIDYALEWCHISAGDILSKEGEPANGFHIVLSGRFRVVKFKTPFKPVASKAGHDTYDYNDNLIDESNKKYTSNDVEILGEYGHGESIGEVEVLTASLRKNTLIAVRDSETARIPRALFELLSLQNPSIMVKVSRIVANRLSKKDSEEILDKPLAMTSSDSPYISSNFKTITILPTVSQLPVREFADKLVQALKAIGRNVIALDQASTLTHLGKHAFDERLAELKLSGYFAYLEEKYETIVYVCDTPVKSNWTSTCISQGDCILLLADADDEDTAESIGSYERLLIKLKTTARTDLCLIHPEKYVTPGSTSIWLKNRVWVQGHHHIQMEISPTQTTSVMKPKIPIISELAKKIKDRANPNIKLKLEEVKGKALASFVKLNNKINAHGRMSFNGVSVHKNDFLRLARILSNEAVGLVLGGGGSRGISHVGVVIALEKHGIPIDLVGGTSIGSFVGGLYAMDYNTVSIYGRAKKFAKRVSSFWRILTDLTYPVTSYMTGYEFNRGIWKIFGFTEIEDFWLRYFCNSTNITNSTMDIHETGYSWRFIRASMSLAGLLPPITYNGSMLLDGGYLDNLPVSEMKKKGAKYIIAVDVGSVDDRTPMNYGDTLSGFWVLLNRWNPFSKHPDVPNMMDIQLRLAYVASVNALEISKKTPGVMYLRPPIENYATLDFAKYDEIYRVGYVYADELFTSWKSSGKLPDIAGMGDKVRKDMSGEHVSLSRRNSI.

Over 1–25 the chain is Cytoplasmic; it reads MDSDTSSADFHSTETLVSTPKYSYG. Residues 26–46 traverse the membrane as a helical segment; that stretch reads VLINVILLVSWTCFRVVNWFL. The Lumenal portion of the chain corresponds to 47–64; it reads VTLPSILLGMLSKTFQIT. Residues 65 to 85 form a helical membrane-spanning segment; sequence LSLSSILMFVVAVTAICFLVV. Residues 86–1438 are Cytoplasmic-facing; the sequence is RYKYLTRYSR…HVSLSRRNSI (1353 aa). Over residues 432–450 the composition is skewed to polar residues; the sequence is YETQTIPNESEDSPTIQRS. The segment at 432–464 is disordered; it reads YETQTIPNESEDSPTIQRSSLRRRASHSTSLRK. A nucleoside 3',5'-cyclic phosphate-binding positions include 590–720 and 707–856; these read GDDS…LTID and RLKR…VANR. Positions 1131 to 1295 constitute a PNPLA domain; sequence LVLGGGGSRG…LDNLPVSEMK (165 aa). A GXGXXG motif is present at residues 1135–1140; it reads GGGSRG. Positions 1162–1166 match the GXSXG motif; it reads GTSIG. The Nucleophile role is filled by serine 1164. Aspartate 1282 serves as the catalytic Proton acceptor. The short motif at 1282 to 1284 is the DGA/G element; that stretch reads DGG.

This sequence belongs to the NTE family.

It is found in the endoplasmic reticulum membrane. It carries out the reaction a 1-acyl-sn-glycero-3-phosphocholine + H2O = sn-glycerol 3-phosphocholine + a fatty acid + H(+). With respect to regulation, inhibited by organophosphorus esters. Its function is as follows. Intracellular phospholipase B that catalyzes the double deacylation of phosphatidylcholine (PC) to glycerophosphocholine (GroPCho). Plays an important role in membrane lipid homeostasis. Responsible for the rapid PC turnover in response to inositol, elevated temperatures, or when choline is present in the growth medium. This is Lysophospholipase NTE1 (NTE1) from Meyerozyma guilliermondii (strain ATCC 6260 / CBS 566 / DSM 6381 / JCM 1539 / NBRC 10279 / NRRL Y-324) (Yeast).